A 105-amino-acid polypeptide reads, in one-letter code: Nucleoid-associated protein OCAR_7544/OCA5_c05960 (105 aa).

Belongs to the YbaB/EbfC family. Homodimer.

Its subcellular location is the cytoplasm. The protein resides in the nucleoid. Its function is as follows. Binds to DNA and alters its conformation. May be involved in regulation of gene expression, nucleoid organization and DNA protection. The chain is Nucleoid-associated protein OCAR_7544/OCA5_c05960 from Afipia carboxidovorans (strain ATCC 49405 / DSM 1227 / KCTC 32145 / OM5) (Oligotropha carboxidovorans).